Here is a 357-residue protein sequence, read N- to C-terminus: GDP-mannose transporter 2 (357 aa).

Residues 1-33 (MASARNGVSKDELLPVYERRSQRDGDISGSVKS) are Cytoplasmic-facing. Residues 34–54 (FASTIGNSASAAVLAYCLSSI) form a helical membrane-spanning segment. Topologically, residues 55–68 (SMTLVNKYVVSGAS) are lumenal. A helical membrane pass occupies residues 69–89 (WNLSFLYLAMQSFIGTVAILA). At 90–107 (CKKTGLIQNLALFDLKKA) the chain is on the cytoplasmic side. A helical membrane pass occupies residues 108–128 (QTWLPISLLLVGMIYTGNKAL). Position 129 (Gln129) is a topological domain, lumenal. The chain crosses the membrane as a helical span at residues 130–150 (FLSVPVYTIFKNLTIIVIAYG). Residues 151–161 (EVLMVGGGVKP) lie on the Cytoplasmic side of the membrane. A helical transmembrane segment spans residues 162–181 (LALLSFGLMVLSSVVAAWAD). Residues 182–196 (IQNATTATVGASSDS) lie on the Lumenal side of the membrane. An N-linked (GlcNAc...) asparagine glycan is attached at Asn184. A helical membrane pass occupies residues 197-217 (TAAALSALNAGYAWMGTNVIF). The Cytoplasmic portion of the chain corresponds to 218 to 236 (SASYALGMRRVIKKTNFDN). The helical transmembrane segment at 237 to 257 (WDVMFYNNLLSIPILLLASVL) threads the bilayer. At 258–277 (AEDWSSENLQRNFPAELRQS) the chain is on the lumenal side. The chain crosses the membrane as a helical span at residues 278–298 (LFIGILYSGVAAVFISYCTAW). The Cytoplasmic segment spans residues 299–306 (CVRATSST). Residues 307 to 327 (TYAMVGALNKLPLAVAGIVFF) traverse the membrane as a helical segment. Residues 328–332 (AAPVT) lie on the Lumenal side of the membrane. A helical transmembrane segment spans residues 333 to 352 (FGSVSAIVLGFISGLVYARA). Residues 353 to 357 (KSTGA) are Cytoplasmic-facing.

This sequence belongs to the TPT transporter family. SLC35D subfamily. Homooligomer.

It localises to the golgi apparatus membrane. The protein localises to the cytoplasmic vesicle membrane. It is found in the endoplasmic reticulum membrane. In terms of biological role, involved in the import of GDP-mannose from the cytoplasm into the Golgi lumen. In Neosartorya fischeri (strain ATCC 1020 / DSM 3700 / CBS 544.65 / FGSC A1164 / JCM 1740 / NRRL 181 / WB 181) (Aspergillus fischerianus), this protein is GDP-mannose transporter 2 (gmt2).